The following is a 349-amino-acid chain: Ion-translocating oxidoreductase complex subunit D (349 aa).

3 consecutive transmembrane segments (helical) span residues 36–56, 77–99, and 124–144; these read CAFFGWGTLIQVLLAIIVALS, SAMLTAILIGVAIPPLAPWWMIV, and AMAAYVLLLVSFPLQMTTWIA. Position 185 is an FMN phosphoryl threonine (Thr185). 5 helical membrane passes run 212–232, 239–259, 265–285, 291–311, and 315–335; these read STGVGWFWVNLAYLAGGIVLL, WHISTGVLAGLFVASSVGFLL, ASPLFHLFSGATMLAAFFIAT, ATSPRGRIIFGALIGVLVYII, and GGYPDAFAFAVLLANLCAPFI.

This sequence belongs to the NqrB/RnfD family. The complex is composed of six subunits: RnfA, RnfB, RnfC, RnfD, RnfE and RnfG. FMN is required as a cofactor.

Its subcellular location is the cell inner membrane. Its function is as follows. Part of a membrane-bound complex that couples electron transfer with translocation of ions across the membrane. The sequence is that of Ion-translocating oxidoreductase complex subunit D from Shewanella oneidensis (strain ATCC 700550 / JCM 31522 / CIP 106686 / LMG 19005 / NCIMB 14063 / MR-1).